The sequence spans 449 residues: Hyaluronidase-1 (449 aa).

A signal peptide spans 1 to 23 (MYHLWIKCLAAWIFLKRCNGVHA). 2 disulfides stabilise this stretch: Cys47-Cys340 and Cys211-Cys227. Residues Asn67, Asn103, and Asn111 are each glycosylated (N-linked (GlcNAc...) asparagine). Catalysis depends on Glu135, which acts as the Proton donor. N-linked (GlcNAc...) asparagine glycosylation occurs at Asn153. A glycan (N-linked (GlcNAc...) asparagine) is linked at Asn357. 3 cysteine pairs are disulfide-bonded: Cys365-Cys376, Cys370-Cys427, and Cys429-Cys438. Asn401 carries N-linked (GlcNAc...) asparagine glycosylation. Positions 427–438 (CQCYQGWKGLYC) constitute an EGF-like domain.

This sequence belongs to the glycosyl hydrolase 56 family. As to quaternary structure, monomer. In terms of tissue distribution, expressed by the venom gland.

It is found in the secreted. It carries out the reaction Random hydrolysis of (1-&gt;4)-linkages between N-acetyl-beta-D-glucosamine and D-glucuronate residues in hyaluronate.. Snake venom endo-hyaluronidase that degrades hyaluronan to smaller oligosaccharide fragments. In venom, it is not toxic by itself, but increases the diffusion of other venom proteins by degrading the extracellular matrix. In addition, it displays antiedematogenic activity. This Bitis arietans (African puff adder) protein is Hyaluronidase-1.